The sequence spans 1313 residues: Target of rapamycin complex 1 subunit mip1 (1313 aa).

A disordered region spans residues 1–35 (MNDRISEVSGSSRARRSVLSYGTTETGSDRYTENS). Phosphoserine occurs at positions 834, 837, and 882. 7 WD repeats span residues 986-1029 (TFNN…NSFK), 1033-1074 (SATT…KVEL), 1087-1126 (GDRNASLLMSWQQNCGHLLVAGDVRVIRIWDASKEICYAN), 1130-1170 (RSSN…RDSL), 1176-1216 (EHSS…SLQT), 1219-1259 (TDNS…NTFR), and 1268-1308 (PKPS…IHTD).

This sequence belongs to the WD repeat RAPTOR family. The target of rapamycin complex 1 (TORC1) is composed of at least mip1, pop3/wat1, tco89, toc1 and tor2.

It is found in the cytoplasm. Component of TORC1, which regulates multiple cellular processes to control cell growth in response to environmental signals. Tor2 is essential for growth. Nutrient limitation and environmental stress signals cause inactivation of TORC1. Active TORC1 positively controls cell growth and ribosome biogenesis by regulating ribosomal protein gene expression. TORC1 negatively controls G1 cell-cycle arrest, sexual development and amino acid uptake. Represses mating, meiosis and sporulation efficiency by interfering with the functions of the transcription factor ste11 and the meiosis-promoting RNA-binding protein mei2. The chain is Target of rapamycin complex 1 subunit mip1 from Schizosaccharomyces pombe (strain 972 / ATCC 24843) (Fission yeast).